The sequence spans 249 residues: Transcription factor MYB90 (249 aa).

2 consecutive HTH myb-type domains span residues 5–57 (SKGL…LNYL) and 58–112 (KPSI…SKKH). 2 consecutive DNA-binding regions (H-T-H motif) follow at residues 33–57 (WHQV…LNYL) and 85–108 (WSLI…NTHL).

In terms of assembly, interacts with BHLH12/MYC1, BHLH1/GL3/MYC6, BHLH2/EGL3/MYC146, and BHLH42/TT8. In terms of tissue distribution, expressed only in leaves and siliques.

Its subcellular location is the nucleus. In terms of biological role, transcription activator, when associated with BHLH12/MYC1, EGL3, or GL3. Promotes the synthesis of phenylpropanoid-derived compounds such as anthocyanins. The sequence is that of Transcription factor MYB90 (MYB90) from Arabidopsis thaliana (Mouse-ear cress).